Reading from the N-terminus, the 183-residue chain is ATP-dependent protease subunit HslV (183 aa).

Thr13 is a catalytic residue. Na(+) contacts are provided by Gly168, Cys171, and Thr174.

It belongs to the peptidase T1B family. HslV subfamily. A double ring-shaped homohexamer of HslV is capped on each side by a ring-shaped HslU homohexamer. The assembly of the HslU/HslV complex is dependent on binding of ATP.

Its subcellular location is the cytoplasm. The enzyme catalyses ATP-dependent cleavage of peptide bonds with broad specificity.. With respect to regulation, allosterically activated by HslU binding. Functionally, protease subunit of a proteasome-like degradation complex believed to be a general protein degrading machinery. The protein is ATP-dependent protease subunit HslV of Stenotrophomonas maltophilia (strain R551-3).